We begin with the raw amino-acid sequence, 622 residues long: MAMAVFKAPLKGEFHGARKMEGKQYKHHLLQQQSTGRRRVFVQTDTGCVLGVELDRNDNVHTVKKRLQIAFNFPTEESSLTFGDMVLKNDLSAVRNDSPLLLKRNLMHRSSSTPCLSPTGNDLQRKDRSGPIEILSHSPCFLSLKQTANDIVKAMKMGVEPIPVNGGLGGAYYFRDEKGQSVAIVKPTDEEPFAPNNPKGFVGKALGQPGLKPSVRVGETGFREVAAYLLDYDHFANVPPTALVKITHSVFNVNDGMDGNKSREKKKLVSSKIASFQKFVPHDFDASDHGTSSFPVASVHRIGILDIRILNTDRHGGNLLVKKLDDGGVGRFGQVELIPIDHGLCLPETLEDPYFEWIHWPQASIPFSEEELDYIQSLDPVKDCEMLRRELPMIREACLRVLVLCTVFLKEAAVFGLCLAEIGEMMTREFRAGEEEPSELEMLCIEAKRLTTEQDVLSPKSDGEGETEFQFDIDYNELDSVYGSETETDEFFAKNPFSNGRSSLGELKESIAEEEEDDEEEAKLTLSLSKLSTSMKNNLSNTMGSGYLKPPKDNQTDKALVSHKSANVQLPLSVNFVKLADMKEVEWVVFLERFQELLYSAFAERKTMTLRNTQRLGTSCKF.

Residues 38–95 (RRVFVQTDTGCVLGVELDRNDNVHTVKKRLQIAFNFPTEESSLTFGDMVLKNDLSAVR) enclose the Ubiquitin-like; degenerate domain. A PI3K/PI4K catalytic domain is found at 158-459 (GVEPIPVNGG…LTTEQDVLSP (302 aa)). Positions 164-170 (VNGGLGG) are G-loop. Residues 165–171 (NGGLGGA), Lys186, and 277–280 (QKFV) each bind ATP. A catalytic loop region spans residues 310–318 (LNTDRHGGN). The segment at 339–365 (PIDHGLCLPETLEDPYFEWIHWPQASI) is activation loop. Asp341 lines the ATP pocket. A Phosphoserine modification is found at Ser565.

This sequence belongs to the PI3/PI4-kinase family. Type II PI4K subfamily.

The enzyme catalyses a 1,2-diacyl-sn-glycero-3-phospho-(1D-myo-inositol) + ATP = a 1,2-diacyl-sn-glycero-3-phospho-(1D-myo-inositol 4-phosphate) + ADP + H(+). In terms of biological role, the phosphorylation of phosphatidylinositol (PI) to PI4P is the first committed step in the generation of phosphatidylinositol 4,5-bisphosphate (PIP2), a precursor of the second messenger inositol 1,4,5-trisphosphate (InsP3). The sequence is that of Phosphatidylinositol 4-kinase gamma 6 (PI4KG6) from Arabidopsis thaliana (Mouse-ear cress).